Consider the following 843-residue polypeptide: RNA-binding protein 25 (843 aa).

The interval 1–30 is disordered; it reads MSFPPHLNRPPMGIPALPPGIPPPQFPGFP. Over residues 12-30 the composition is skewed to pro residues; that stretch reads MGIPALPPGIPPPQFPGFP. An RRM domain is found at 87–164; sequence TTVFVGNISE…KKLLVKVDAK (78 aa). N6-acetyllysine is present on Lys-135. Disordered stretches follow at residues 171-202 and 219-243; these read EWKAKKKASNGNARPETVTNDDEEALDEETKR and SSELNAPSQESDSHPRKKKKEKKED. A phosphoserine mark is found at Ser-226 and Ser-229. Residues Lys-261, Lys-273, and Lys-430 each participate in a glycyl lysine isopeptide (Lys-Gly) (interchain with G-Cter in SUMO2) cross-link. 2 stretches are compositionally biased toward basic and acidic residues: residues 280 to 433 and 521 to 573; these read EISK…KRDR and RLRD…ERRR. 2 disordered regions span residues 280–442 and 498–688; these read EISK…DAYE and EFLE…KRKK. A necessary for nuclear speckle localization region spans residues 285–644; that stretch reads RDTHKKLEEE…PNTPGDESPC (360 aa). A Glycyl lysine isopeptide (Lys-Gly) (interchain with G-Cter in SUMO2) cross-link involves residue Lys-578. Ser-583 is modified (phosphoserine). Basic and acidic residues predominate over residues 590–599; that stretch reads KQEKEEKREE. The segment covering 621–630 has biased composition (low complexity); sequence SSAPSVSSAS. A Glycyl lysine isopeptide (Lys-Gly) (interchain with G-Cter in SUMO2) cross-link involves residue Lys-671. The segment covering 674-683 has biased composition (polar residues); that stretch reads ASNSPGQPNS. Phosphoserine occurs at positions 677 and 683. Glycyl lysine isopeptide (Lys-Gly) (interchain with G-Cter in SUMO2) cross-links involve residues Lys-688 and Lys-697. Ser-703 carries the phosphoserine modification. Lys-722 participates in a covalent cross-link: Glycyl lysine isopeptide (Lys-Gly) (interchain with G-Cter in SUMO2). A PWI domain is found at 750 to 843; it reads PELFAYPLDW…TEAKKIGLVK (94 aa).

As to quaternary structure, interacts with LUC7L3 and SRRM1. Specifically associates with functional splicing complexes, including Sm proteins and U1, U2, U4, U5 and U6 snRNAs. Associates with exon junction complex (EJC) proteins, including APEX1, DDX39B, NCBP1, RBM8A and RNPS1. Interaction with NCBP1 is RNA-dependent. Post-translationally, sumoylated.

The protein resides in the nucleus speckle. The protein localises to the cytoplasm. Its function is as follows. RNA-binding protein that acts as a regulator of alternative pre-mRNA splicing. Involved in apoptotic cell death through the regulation of the apoptotic factor BCL2L1 isoform expression. Modulates the ratio of proapoptotic BCL2L1 isoform S to antiapoptotic BCL2L1 isoform L mRNA expression. When overexpressed, stimulates proapoptotic BCL2L1 isoform S 5'-splice site (5'-ss) selection, whereas its depletion caused the accumulation of antiapoptotic BCL2L1 isoform L. Promotes BCL2L1 isoform S 5'-ss usage through the 5'-CGGGCA-3' RNA sequence. Its association with LUC7L3 promotes U1 snRNP binding to a weak 5' ss in a 5'-CGGGCA-3'-dependent manner. Binds to the exonic splicing enhancer 5'-CGGGCA-3' RNA sequence located within exon 2 of the BCL2L1 pre-mRNA. Also involved in the generation of an abnormal and truncated splice form of SCN5A in heart failure. The sequence is that of RNA-binding protein 25 (RBM25) from Homo sapiens (Human).